Consider the following 102-residue polypeptide: Co-chaperonin GroES (102 aa).

Belongs to the GroES chaperonin family. In terms of assembly, heptamer of 7 subunits arranged in a ring. Interacts with the chaperonin GroEL.

It is found in the cytoplasm. Its function is as follows. Together with the chaperonin GroEL, plays an essential role in assisting protein folding. The GroEL-GroES system forms a nano-cage that allows encapsulation of the non-native substrate proteins and provides a physical environment optimized to promote and accelerate protein folding. GroES binds to the apical surface of the GroEL ring, thereby capping the opening of the GroEL channel. This Streptomyces griseus subsp. griseus (strain JCM 4626 / CBS 651.72 / NBRC 13350 / KCC S-0626 / ISP 5235) protein is Co-chaperonin GroES.